The chain runs to 235 residues: Glycerol-3-phosphate acyltransferase (235 aa).

6 consecutive transmembrane segments (helical) span residues 4–24, 56–76, 94–114, 124–144, 152–172, and 191–211; these read LLAI…IMAG, TVTL…VAFF, LLAG…GFKG, MLIG…LLTI, VASM…KYIF, and FHDS…LGIL.

Belongs to the PlsY family. As to quaternary structure, probably interacts with PlsX.

It localises to the cell inner membrane. The catalysed reaction is an acyl phosphate + sn-glycerol 3-phosphate = a 1-acyl-sn-glycero-3-phosphate + phosphate. Its pathway is lipid metabolism; phospholipid metabolism. Its function is as follows. Catalyzes the transfer of an acyl group from acyl-phosphate (acyl-PO(4)) to glycerol-3-phosphate (G3P) to form lysophosphatidic acid (LPA). This enzyme utilizes acyl-phosphate as fatty acyl donor, but not acyl-CoA or acyl-ACP. The sequence is that of Glycerol-3-phosphate acyltransferase from Chlorobium limicola (strain DSM 245 / NBRC 103803 / 6330).